We begin with the raw amino-acid sequence, 212 residues long: uncharacterized protein (212 aa).

A signal peptide spans 1–18 (MIPLVALLVLLTLQASPG). Residues 186-208 (IYRLATFFMVSLFVGSFVALVFV) traverse the membrane as a helical segment.

It to A.fulgidus AF_0540.

The protein localises to the membrane. This is an uncharacterized protein from Archaeoglobus fulgidus (strain ATCC 49558 / DSM 4304 / JCM 9628 / NBRC 100126 / VC-16).